We begin with the raw amino-acid sequence, 140 residues long: Acyl-coenzyme A thioesterase PaaI (140 aa).

In terms of assembly, homotetramer.

It participates in aromatic compound metabolism; phenylacetate degradation. In terms of biological role, thioesterase with a preference for ring-hydroxylated phenylacetyl-CoA esters. Hydrolyzes 3,4-dihydroxyphenylacetyl-CoA, 3-hydroxyphenylacetyl-CoA and 4-hydroxyphenylacetyl-CoA. Inactive towards 4-hydroxybenzoyl-CoA and 4-hydroxyphenacyl-CoA. The sequence is that of Acyl-coenzyme A thioesterase PaaI (paaI) from Escherichia coli (strain K12).